The chain runs to 164 residues: Transcriptional repressor NrdR (164 aa).

Residues 3-34 fold into a zinc finger; the sequence is CPKCNYNKSSVVDSRQAEDGNTIRRRRECESC. Positions 49 to 139 constitute an ATP-cone domain; the sequence is LLVIKKDGTR…VYKSFKDLDE (91 aa).

Belongs to the NrdR family. It depends on Zn(2+) as a cofactor.

In terms of biological role, negatively regulates transcription of bacterial ribonucleotide reductase nrd genes and operons by binding to NrdR-boxes. The protein is Transcriptional repressor NrdR of Streptococcus equi subsp. zooepidemicus (strain H70).